The chain runs to 153 residues: Holo-[acyl-carrier-protein] synthase (153 aa).

Mg(2+) is bound by residues aspartate 24 and glutamate 78.

This sequence belongs to the P-Pant transferase superfamily. AcpS family. It depends on Mg(2+) as a cofactor.

It localises to the cytoplasm. It carries out the reaction apo-[ACP] + CoA = holo-[ACP] + adenosine 3',5'-bisphosphate + H(+). Functionally, transfers the 4'-phosphopantetheine moiety from coenzyme A to a Ser of acyl-carrier-protein. The chain is Holo-[acyl-carrier-protein] synthase from Bordetella parapertussis (strain 12822 / ATCC BAA-587 / NCTC 13253).